Reading from the N-terminus, the 272-residue chain is ATP phosphoribosyltransferase regulatory subunit (272 aa).

This sequence belongs to the class-II aminoacyl-tRNA synthetase family. HisZ subfamily. In terms of assembly, heteromultimer composed of HisG and HisZ subunits.

It is found in the cytoplasm. It participates in amino-acid biosynthesis; L-histidine biosynthesis; L-histidine from 5-phospho-alpha-D-ribose 1-diphosphate: step 1/9. Required for the first step of histidine biosynthesis. May allow the feedback regulation of ATP phosphoribosyltransferase activity by histidine. The polypeptide is ATP phosphoribosyltransferase regulatory subunit (Staphylococcus aureus (strain MRSA252)).